Reading from the N-terminus, the 562-residue chain is Arylsulfatase H (562 aa).

Aspartate 15, aspartate 16, and cysteine 55 together coordinate Ca(2+). Catalysis depends on cysteine 55, which acts as the Nucleophile. Cysteine 55 is modified (3-oxoalanine (Cys)). Lysine 115 serves as a coordination point for substrate. The active site involves histidine 117. 2 helical membrane passes run 167–187 (LWIS…PKYA) and 189–209 (WFVV…LFFI). Histidine 271 contacts substrate. 2 residues coordinate Ca(2+): aspartate 323 and asparagine 324.

Belongs to the sulfatase family. Requires Ca(2+) as cofactor. The conversion to 3-oxoalanine (also known as C-formylglycine, FGly), of a serine or cysteine residue in prokaryotes and of a cysteine residue in eukaryotes, is critical for catalytic activity.

The protein resides in the membrane. The protein is Arylsulfatase H (ARSH) of Canis lupus familiaris (Dog).